A 286-amino-acid polypeptide reads, in one-letter code: 2,3,4,5-tetrahydropyridine-2,6-dicarboxylate N-succinyltransferase (286 aa).

It belongs to the transferase hexapeptide repeat family.

The protein localises to the cytoplasm. The catalysed reaction is (S)-2,3,4,5-tetrahydrodipicolinate + succinyl-CoA + H2O = (S)-2-succinylamino-6-oxoheptanedioate + CoA. It functions in the pathway amino-acid biosynthesis; L-lysine biosynthesis via DAP pathway; LL-2,6-diaminopimelate from (S)-tetrahydrodipicolinate (succinylase route): step 1/3. The chain is 2,3,4,5-tetrahydropyridine-2,6-dicarboxylate N-succinyltransferase from Rhizobium leguminosarum bv. trifolii (strain WSM2304).